The following is a 353-amino-acid chain: Photosystem II protein D1 (353 aa).

Threonine 2 carries the N-acetylthreonine modification. Position 2 is a phosphothreonine (threonine 2). Transmembrane regions (helical) follow at residues 29–46, 118–133, and 142–156; these read YIGWFGVLMIPTLLTATS, HFLLGVACYMGREWEL, and WIAVAYSAPVAAATA. Chlorophyll a is bound at residue histidine 118. Tyrosine 126 serves as a coordination point for pheophytin a. [CaMn4O5] cluster is bound by residues aspartate 170 and glutamate 189. The helical transmembrane segment at 197 to 218 threads the bilayer; it reads FHMLGVAGVFGGSLFSAMHGSL. A chlorophyll a-binding site is contributed by histidine 198. Residues histidine 215 and 264–265 contribute to the a quinone site; that span reads SF. Histidine 215 contacts Fe cation. Histidine 272 lines the Fe cation pocket. A helical transmembrane segment spans residues 274-288; sequence FLAAWPVVGIWFTAL. Residues histidine 332, glutamate 333, aspartate 342, and alanine 344 each contribute to the [CaMn4O5] cluster site. Residues 345-353 constitute a propeptide that is removed on maturation; sequence AVEVPSTNG.

Belongs to the reaction center PufL/M/PsbA/D family. PSII is composed of 1 copy each of membrane proteins PsbA, PsbB, PsbC, PsbD, PsbE, PsbF, PsbH, PsbI, PsbJ, PsbK, PsbL, PsbM, PsbT, PsbX, PsbY, PsbZ, Psb30/Ycf12, at least 3 peripheral proteins of the oxygen-evolving complex and a large number of cofactors. It forms dimeric complexes. The D1/D2 heterodimer binds P680, chlorophylls that are the primary electron donor of PSII, and subsequent electron acceptors. It shares a non-heme iron and each subunit binds pheophytin, quinone, additional chlorophylls, carotenoids and lipids. D1 provides most of the ligands for the Mn4-Ca-O5 cluster of the oxygen-evolving complex (OEC). There is also a Cl(-1) ion associated with D1 and D2, which is required for oxygen evolution. The PSII complex binds additional chlorophylls, carotenoids and specific lipids. serves as cofactor. Post-translationally, tyr-161 forms a radical intermediate that is referred to as redox-active TyrZ, YZ or Y-Z. C-terminally processed by CTPA; processing is essential to allow assembly of the oxygen-evolving complex and thus photosynthetic growth.

It localises to the plastid. The protein localises to the chloroplast thylakoid membrane. It catalyses the reaction 2 a plastoquinone + 4 hnu + 2 H2O = 2 a plastoquinol + O2. Photosystem II (PSII) is a light-driven water:plastoquinone oxidoreductase that uses light energy to abstract electrons from H(2)O, generating O(2) and a proton gradient subsequently used for ATP formation. It consists of a core antenna complex that captures photons, and an electron transfer chain that converts photonic excitation into a charge separation. The D1/D2 (PsbA/PsbD) reaction center heterodimer binds P680, the primary electron donor of PSII as well as several subsequent electron acceptors. In Eucalyptus globulus subsp. globulus (Tasmanian blue gum), this protein is Photosystem II protein D1.